Consider the following 77-residue polypeptide: Acyl carrier protein (77 aa).

In terms of domain architecture, Carrier spans 2-77; sequence AEVLEKVTKI…DAVKYIEANA (76 aa). Ser37 bears the O-(pantetheine 4'-phosphoryl)serine mark.

The protein belongs to the acyl carrier protein (ACP) family. Post-translationally, 4'-phosphopantetheine is transferred from CoA to a specific serine of apo-ACP by AcpS. This modification is essential for activity because fatty acids are bound in thioester linkage to the sulfhydryl of the prosthetic group.

Its subcellular location is the cytoplasm. It functions in the pathway lipid metabolism; fatty acid biosynthesis. In terms of biological role, carrier of the growing fatty acid chain in fatty acid biosynthesis. The sequence is that of Acyl carrier protein from Listeria innocua serovar 6a (strain ATCC BAA-680 / CLIP 11262).